Reading from the N-terminus, the 269-residue chain is UPF0739 protein C1orf74 (269 aa).

The protein belongs to the UPF0739 family.

This is UPF0739 protein C1orf74 (C1orf74) from Homo sapiens (Human).